Here is an 874-residue protein sequence, read N- to C-terminus: Alanine--tRNA ligase (874 aa).

4 residues coordinate Zn(2+): histidine 559, histidine 563, cysteine 661, and histidine 665.

The protein belongs to the class-II aminoacyl-tRNA synthetase family. Zn(2+) is required as a cofactor.

Its subcellular location is the cytoplasm. The enzyme catalyses tRNA(Ala) + L-alanine + ATP = L-alanyl-tRNA(Ala) + AMP + diphosphate. In terms of biological role, catalyzes the attachment of alanine to tRNA(Ala) in a two-step reaction: alanine is first activated by ATP to form Ala-AMP and then transferred to the acceptor end of tRNA(Ala). Also edits incorrectly charged Ser-tRNA(Ala) and Gly-tRNA(Ala) via its editing domain. The sequence is that of Alanine--tRNA ligase from Microcystis aeruginosa (strain NIES-843 / IAM M-2473).